Reading from the N-terminus, the 113-residue chain is UPF0122 protein MGAS10270_Spy1030 (113 aa).

Belongs to the UPF0122 family.

In terms of biological role, might take part in the signal recognition particle (SRP) pathway. This is inferred from the conservation of its genetic proximity to ftsY/ffh. May be a regulatory protein. The protein is UPF0122 protein MGAS10270_Spy1030 of Streptococcus pyogenes serotype M2 (strain MGAS10270).